Reading from the N-terminus, the 206-residue chain is Small ribosomal subunit protein uS4A (206 aa).

The S4 RNA-binding domain occupies 96 to 156 (GRLDNVVYRM…EKAKKQSRIG (61 aa)).

This sequence belongs to the universal ribosomal protein uS4 family. As to quaternary structure, part of the 30S ribosomal subunit. Contacts protein S5. The interaction surface between S4 and S5 is involved in control of translational fidelity.

Functionally, one of the primary rRNA binding proteins, it binds directly to 16S rRNA where it nucleates assembly of the body of the 30S subunit. In terms of biological role, with S5 and S12 plays an important role in translational accuracy. The chain is Small ribosomal subunit protein uS4A from Psychromonas ingrahamii (strain DSM 17664 / CCUG 51855 / 37).